Here is a 138-residue protein sequence, read N- to C-terminus: ATP synthase epsilon chain (138 aa).

A disordered region spans residues 88–119 (DREEARSTLSAAQARLDQSEQSEDKQERYEAQ). The span at 109 to 119 (SEDKQERYEAQ) shows a compositional bias: basic and acidic residues.

Belongs to the ATPase epsilon chain family. F-type ATPases have 2 components, CF(1) - the catalytic core - and CF(0) - the membrane proton channel. CF(1) has five subunits: alpha(3), beta(3), gamma(1), delta(1), epsilon(1). CF(0) has three main subunits: a, b and c.

The protein resides in the cellular thylakoid membrane. Functionally, produces ATP from ADP in the presence of a proton gradient across the membrane. The sequence is that of ATP synthase epsilon chain from Acaryochloris marina (strain MBIC 11017).